The chain runs to 113 residues: Large ribosomal subunit protein bL19 (113 aa).

This sequence belongs to the bacterial ribosomal protein bL19 family.

Functionally, this protein is located at the 30S-50S ribosomal subunit interface and may play a role in the structure and function of the aminoacyl-tRNA binding site. The polypeptide is Large ribosomal subunit protein bL19 (Corynebacterium efficiens (strain DSM 44549 / YS-314 / AJ 12310 / JCM 11189 / NBRC 100395)).